We begin with the raw amino-acid sequence, 494 residues long: Ketol-acid reductoisomerase (NADP(+)) (494 aa).

A KARI N-terminal Rossmann domain is found at 14–208 (LDQLGRCRFM…GGHRAGVLES (195 aa)). NADP(+) is bound by residues 45-48 (CGAQ), arginine 68, arginine 76, serine 78, and 108-110 (DKQ). Histidine 132 is a catalytic residue. Residue glycine 158 participates in NADP(+) binding. KARI C-terminal knotted domains follow at residues 209–344 (SFVA…NYPV) and 345–487 (TDVE…MTDM). Mg(2+)-binding residues include aspartate 217, glutamate 221, glutamate 389, and glutamate 393. Serine 414 lines the substrate pocket.

This sequence belongs to the ketol-acid reductoisomerase family. The cofactor is Mg(2+).

It catalyses the reaction (2R)-2,3-dihydroxy-3-methylbutanoate + NADP(+) = (2S)-2-acetolactate + NADPH + H(+). It carries out the reaction (2R,3R)-2,3-dihydroxy-3-methylpentanoate + NADP(+) = (S)-2-ethyl-2-hydroxy-3-oxobutanoate + NADPH + H(+). It functions in the pathway amino-acid biosynthesis; L-isoleucine biosynthesis; L-isoleucine from 2-oxobutanoate: step 2/4. It participates in amino-acid biosynthesis; L-valine biosynthesis; L-valine from pyruvate: step 2/4. Involved in the biosynthesis of branched-chain amino acids (BCAA). Catalyzes an alkyl-migration followed by a ketol-acid reduction of (S)-2-acetolactate (S2AL) to yield (R)-2,3-dihydroxy-isovalerate. In the isomerase reaction, S2AL is rearranged via a Mg-dependent methyl migration to produce 3-hydroxy-3-methyl-2-ketobutyrate (HMKB). In the reductase reaction, this 2-ketoacid undergoes a metal-dependent reduction by NADPH to yield (R)-2,3-dihydroxy-isovalerate. This Photobacterium profundum (strain SS9) protein is Ketol-acid reductoisomerase (NADP(+)).